A 252-amino-acid polypeptide reads, in one-letter code: Imidazole glycerol phosphate synthase subunit HisF (252 aa).

Catalysis depends on residues Asp11 and Asp130.

The protein belongs to the HisA/HisF family. Heterodimer of HisH and HisF.

It localises to the cytoplasm. The catalysed reaction is 5-[(5-phospho-1-deoxy-D-ribulos-1-ylimino)methylamino]-1-(5-phospho-beta-D-ribosyl)imidazole-4-carboxamide + L-glutamine = D-erythro-1-(imidazol-4-yl)glycerol 3-phosphate + 5-amino-1-(5-phospho-beta-D-ribosyl)imidazole-4-carboxamide + L-glutamate + H(+). Its pathway is amino-acid biosynthesis; L-histidine biosynthesis; L-histidine from 5-phospho-alpha-D-ribose 1-diphosphate: step 5/9. In terms of biological role, IGPS catalyzes the conversion of PRFAR and glutamine to IGP, AICAR and glutamate. The HisF subunit catalyzes the cyclization activity that produces IGP and AICAR from PRFAR using the ammonia provided by the HisH subunit. The chain is Imidazole glycerol phosphate synthase subunit HisF from Bacillus cereus (strain AH820).